Here is an 85-residue protein sequence, read N- to C-terminus: Large ribosomal subunit protein bL27 (85 aa).

A disordered region spans residues Met1–Met20.

It belongs to the bacterial ribosomal protein bL27 family.

The polypeptide is Large ribosomal subunit protein bL27 (Acinetobacter baumannii (strain AB307-0294)).